Reading from the N-terminus, the 256-residue chain is Zinc import ATP-binding protein ZnuC 1 (256 aa).

Residues 5-220 (LTLQDVCVVF…PKYIALFGQQ (216 aa)) form the ABC transporter domain. Residue 37–44 (GPNGAGKS) participates in ATP binding. Positions 232-256 (HHHNHDLSGEPSDGSCCSKNKKAHQ) are disordered.

Belongs to the ABC transporter superfamily. Zinc importer (TC 3.A.1.15.5) family. The complex is composed of two ATP-binding proteins (ZnuC), two transmembrane proteins (ZnuB) and a solute-binding protein (ZnuA).

It is found in the cell inner membrane. The enzyme catalyses Zn(2+)(out) + ATP(in) + H2O(in) = Zn(2+)(in) + ADP(in) + phosphate(in) + H(+)(in). Part of the ABC transporter complex ZnuABC involved in zinc import. Responsible for energy coupling to the transport system. The protein is Zinc import ATP-binding protein ZnuC 1 of Aliivibrio fischeri (strain ATCC 700601 / ES114) (Vibrio fischeri).